The chain runs to 221 residues: Endo-1,4-beta-xylanase 1 (221 aa).

Positions 1–22 (MKFFATIAALVVAAVAAPVAEA) are cleaved as a signal peptide. The region spanning 29 to 221 (PMLIERAGPG…GTGSASVTVS (193 aa)) is the GH11 domain. The active-site Nucleophile is the Glu114. Glu208 acts as the Proton donor in catalysis.

Belongs to the glycosyl hydrolase 11 (cellulase G) family.

Its subcellular location is the secreted. The enzyme catalyses Endohydrolysis of (1-&gt;4)-beta-D-xylosidic linkages in xylans.. It functions in the pathway glycan degradation; xylan degradation. Its function is as follows. Endo-1,4-beta-xylanase involved in the hydrolysis of xylan, a major structural heterogeneous polysaccharide found in plant biomass representing the second most abundant polysaccharide in the biosphere, after cellulose. Hydrolyzes xylans from oat spelt and birchwood at similar rates, but it has no detectable activity toward Avicel or carboxymethyl cellulose. This chain is Endo-1,4-beta-xylanase 1 (xynI), found in Aureobasidium pullulans (Black yeast).